The primary structure comprises 802 residues: Copper-exporting P-type ATPase (802 aa).

HMA domains follow at residues 5 to 70 and 72 to 138; these read KKTT…YGVA and ETVE…YDAS. Residues cysteine 16, cysteine 19, cysteine 83, and cysteine 86 each coordinate Cu(+). 6 consecutive transmembrane segments (helical) span residues 161 to 181, 192 to 212, 224 to 244, 256 to 276, 411 to 431, and 438 to 458; these read LIISAVLSLPLLMLMFVHLFN, WFQFILATPVQFIIGWQFYVG, MDVLVAVGTSAAYFYSIYEMV, LYFETSAVLITLILFGKYLEA, YFVPIVVGIALLTFIVWITLV, and PALVASISVLVIACPCALGLA. The active-site 4-aspartylphosphate intermediate is the aspartate 495. Mg(2+)-binding residues include aspartate 690 and aspartate 694. 2 helical membrane-spanning segments follow: residues 748-767 and 771-790; these read LFWAFGYNIAGIPIAALGLL and VAGAAMALSSVSVVTNALRL.

It belongs to the cation transport ATPase (P-type) (TC 3.A.3) family. Type IB subfamily.

It localises to the cell membrane. The catalysed reaction is Cu(+)(in) + ATP + H2O = Cu(+)(out) + ADP + phosphate + H(+). Involved in copper export. This chain is Copper-exporting P-type ATPase (copA), found in Staphylococcus aureus (strain USA300 / TCH1516).